The following is a 294-amino-acid chain: MKNNKVLVVVGPTAVGKTALGIDLAIKMNGEIISGDSQQVYQGLDIGTAKVTKAEQALAVHHLIDVRKWTENFSVHDFVMEANRLIKEIIERGNVPIIVGGTGLYIQSLIEGYHLGGQKNHQAMMELRETLSALTDEELFEKVLKLNPNFPELNRRRAIRFLELQTFGSTDENSGSDYNFLLIGLNAERKVLYERINQRVEQMMSEGLLAEARTLFEKAPDAQAAKGIGYKEFFPYFSGEISLEDAVELVKRNSRRYAKRQLTWFRNRMEVEFEDVFSETYPDSVFEKVTQFLN.

11 to 18 (GPTAVGKT) contacts ATP. Residue 13 to 18 (TAVGKT) participates in substrate binding. Positions 36-39 (DSQQ) are interaction with substrate tRNA.

The protein belongs to the IPP transferase family. Monomer. The cofactor is Mg(2+).

It carries out the reaction adenosine(37) in tRNA + dimethylallyl diphosphate = N(6)-dimethylallyladenosine(37) in tRNA + diphosphate. Its function is as follows. Catalyzes the transfer of a dimethylallyl group onto the adenine at position 37 in tRNAs that read codons beginning with uridine, leading to the formation of N6-(dimethylallyl)adenosine (i(6)A). The protein is tRNA dimethylallyltransferase of Lactococcus lactis subsp. cremoris (strain SK11).